The chain runs to 257 residues: Type III pantothenate kinase (257 aa).

An ATP-binding site is contributed by 6–13 (DVGNTSTK). Position 109–112 (109–112 (GADR)) interacts with substrate. D111 serves as the catalytic Proton acceptor. Position 132 (D132) interacts with K(+). T135 is an ATP binding site. T187 is a binding site for substrate.

It belongs to the type III pantothenate kinase family. As to quaternary structure, homodimer. NH4(+) is required as a cofactor. K(+) serves as cofactor.

The protein resides in the cytoplasm. It carries out the reaction (R)-pantothenate + ATP = (R)-4'-phosphopantothenate + ADP + H(+). The protein operates within cofactor biosynthesis; coenzyme A biosynthesis; CoA from (R)-pantothenate: step 1/5. In terms of biological role, catalyzes the phosphorylation of pantothenate (Pan), the first step in CoA biosynthesis. The sequence is that of Type III pantothenate kinase from Anaplasma marginale (strain St. Maries).